Consider the following 108-residue polypeptide: uncharacterized protein (108 aa).

3 helical membrane passes run 26–46 (GAVY…ALII), 54–74 (LMTL…PLIF), and 84–104 (INYQ…CIYM).

It localises to the cell membrane. This is an uncharacterized protein from Methanocaldococcus jannaschii (strain ATCC 43067 / DSM 2661 / JAL-1 / JCM 10045 / NBRC 100440) (Methanococcus jannaschii).